A 516-amino-acid polypeptide reads, in one-letter code: ADP-ribosylation factor GTPase-activating protein 3 (516 aa).

One can recognise an Arf-GAP domain in the interval 10 to 126 (LTIFKRLRSV…IKSLASQATR (117 aa)). A C4-type zinc finger spans residues 25–48 (CFDCGAKNPSWASITYGVFLCIDC). The interval 170–199 (AEPSSLTSRPVETTLENNEGGQEQGPSVEG) is disordered. A compositionally biased stretch (polar residues) spans 173 to 194 (SSLTSRPVETTLENNEGGQEQG). Phosphoserine is present on Ser-231. Positions 243–264 (NEIEKQAQAADKMKEQEDLAKA) form a coiled coil. A phosphoserine mark is found at Ser-270, Ser-274, Ser-331, and Ser-370. The interval 392 to 414 (KTTGYSDRPTARRKPDYEPVENT) is disordered. A phosphoserine mark is found at Ser-428, Ser-451, Ser-453, Ser-455, Ser-457, and Ser-458.

It localises to the cytoplasm. It is found in the golgi apparatus membrane. GAP activity stimulated by phosphatidylinositol 4,5-bisphosphate (PIP2). Functionally, GTPase-activating protein (GAP) for ADP ribosylation factor 1 (ARF1). Hydrolysis of ARF1-bound GTP may lead to dissociation of coatomer from Golgi-derived membranes to allow fusion with target membranes. This Macaca fascicularis (Crab-eating macaque) protein is ADP-ribosylation factor GTPase-activating protein 3.